Consider the following 356-residue polypeptide: S-adenosylmethionine:tRNA ribosyltransferase-isomerase (356 aa).

Belongs to the QueA family. Monomer.

It localises to the cytoplasm. It carries out the reaction 7-aminomethyl-7-carbaguanosine(34) in tRNA + S-adenosyl-L-methionine = epoxyqueuosine(34) in tRNA + adenine + L-methionine + 2 H(+). Its pathway is tRNA modification; tRNA-queuosine biosynthesis. Functionally, transfers and isomerizes the ribose moiety from AdoMet to the 7-aminomethyl group of 7-deazaguanine (preQ1-tRNA) to give epoxyqueuosine (oQ-tRNA). This Shigella boydii serotype 18 (strain CDC 3083-94 / BS512) protein is S-adenosylmethionine:tRNA ribosyltransferase-isomerase.